The chain runs to 141 residues: Large ribosomal subunit protein uL16 (141 aa).

The segment at 1–20 (MLMPKRTKYRKQMKGRNRGK) is disordered.

The protein belongs to the universal ribosomal protein uL16 family. As to quaternary structure, part of the 50S ribosomal subunit.

Functionally, binds 23S rRNA and is also seen to make contacts with the A and possibly P site tRNAs. The polypeptide is Large ribosomal subunit protein uL16 (Helicobacter hepaticus (strain ATCC 51449 / 3B1)).